A 368-amino-acid polypeptide reads, in one-letter code: tRNA/tmRNA (uracil-C(5))-methyltransferase (368 aa).

S-adenosyl-L-methionine-binding residues include Gln-190, Tyr-218, Asn-223, Glu-239, and Asp-301. Cys-326 acts as the Nucleophile in catalysis. Catalysis depends on Glu-360, which acts as the Proton acceptor.

It belongs to the class I-like SAM-binding methyltransferase superfamily. RNA M5U methyltransferase family. TrmA subfamily.

It catalyses the reaction uridine(54) in tRNA + S-adenosyl-L-methionine = 5-methyluridine(54) in tRNA + S-adenosyl-L-homocysteine + H(+). The enzyme catalyses uridine(341) in tmRNA + S-adenosyl-L-methionine = 5-methyluridine(341) in tmRNA + S-adenosyl-L-homocysteine + H(+). Dual-specificity methyltransferase that catalyzes the formation of 5-methyluridine at position 54 (m5U54) in all tRNAs, and that of position 341 (m5U341) in tmRNA (transfer-mRNA). This chain is tRNA/tmRNA (uracil-C(5))-methyltransferase, found in Photobacterium profundum (strain SS9).